The sequence spans 339 residues: DNA-directed RNA polymerase subunit alpha (339 aa).

The interval 1 to 238 (MVDPIVTKNW…EQLSIFINFD (238 aa)) is alpha N-terminal domain (alpha-NTD). Positions 250-339 (VEEQKLNENL…KAAPQGAPKV (90 aa)) are alpha C-terminal domain (alpha-CTD).

Belongs to the RNA polymerase alpha chain family. In terms of assembly, homodimer. The RNAP catalytic core consists of 2 alpha, 1 beta, 1 beta' and 1 omega subunit. When a sigma factor is associated with the core the holoenzyme is formed, which can initiate transcription.

It catalyses the reaction RNA(n) + a ribonucleoside 5'-triphosphate = RNA(n+1) + diphosphate. Its function is as follows. DNA-dependent RNA polymerase catalyzes the transcription of DNA into RNA using the four ribonucleoside triphosphates as substrates. The sequence is that of DNA-directed RNA polymerase subunit alpha from Anaeromyxobacter dehalogenans (strain 2CP-C).